Reading from the N-terminus, the 314-residue chain is Lipoyl synthase (314 aa).

Residues Cys-60, Cys-65, Cys-71, Cys-86, Cys-90, Cys-93, and Ser-300 each coordinate [4Fe-4S] cluster. The 218-residue stretch at 72-289 folds into the Radical SAM core domain; that stretch reads FRKGTATFMI…RQFGLSIGFS (218 aa).

It belongs to the radical SAM superfamily. Lipoyl synthase family. [4Fe-4S] cluster serves as cofactor.

The protein localises to the cytoplasm. It carries out the reaction [[Fe-S] cluster scaffold protein carrying a second [4Fe-4S](2+) cluster] + N(6)-octanoyl-L-lysyl-[protein] + 2 oxidized [2Fe-2S]-[ferredoxin] + 2 S-adenosyl-L-methionine + 4 H(+) = [[Fe-S] cluster scaffold protein] + N(6)-[(R)-dihydrolipoyl]-L-lysyl-[protein] + 4 Fe(3+) + 2 hydrogen sulfide + 2 5'-deoxyadenosine + 2 L-methionine + 2 reduced [2Fe-2S]-[ferredoxin]. The protein operates within protein modification; protein lipoylation via endogenous pathway; protein N(6)-(lipoyl)lysine from octanoyl-[acyl-carrier-protein]: step 2/2. In terms of biological role, catalyzes the radical-mediated insertion of two sulfur atoms into the C-6 and C-8 positions of the octanoyl moiety bound to the lipoyl domains of lipoate-dependent enzymes, thereby converting the octanoylated domains into lipoylated derivatives. The polypeptide is Lipoyl synthase (Pelobacter propionicus (strain DSM 2379 / NBRC 103807 / OttBd1)).